We begin with the raw amino-acid sequence, 123 residues long: Nitrogen fixation nifHD1 region GlnB-like protein 2 (123 aa).

It belongs to the P(II) protein family.

Its function is as follows. Could be involved in the regulation of nitrogen fixation. The polypeptide is Nitrogen fixation nifHD1 region GlnB-like protein 2 (glnBB) (Methanosarcina barkeri).